A 404-amino-acid polypeptide reads, in one-letter code: Phosphopentomutase (404 aa).

6 residues coordinate Mn(2+): Asp10, Asp303, His308, Asp344, His345, and His356.

The protein belongs to the phosphopentomutase family. Mn(2+) is required as a cofactor.

The protein localises to the cytoplasm. It catalyses the reaction 2-deoxy-alpha-D-ribose 1-phosphate = 2-deoxy-D-ribose 5-phosphate. The enzyme catalyses alpha-D-ribose 1-phosphate = D-ribose 5-phosphate. It functions in the pathway carbohydrate degradation; 2-deoxy-D-ribose 1-phosphate degradation; D-glyceraldehyde 3-phosphate and acetaldehyde from 2-deoxy-alpha-D-ribose 1-phosphate: step 1/2. In terms of biological role, isomerase that catalyzes the conversion of deoxy-ribose 1-phosphate (dRib-1-P) and ribose 1-phosphate (Rib-1-P) to deoxy-ribose 5-phosphate (dRib-5-P) and ribose 5-phosphate (Rib-5-P), respectively. The sequence is that of Phosphopentomutase from Shewanella baltica (strain OS223).